Here is a 349-residue protein sequence, read N- to C-terminus: uncharacterized protein (349 aa).

The first 16 residues, 1-16 (MLFKISFLALIASALA), serve as a signal peptide directing secretion. Residues 17–326 (MSINSPTNGD…SSSSSSSAAS (310 aa)) lie on the Lumenal side of the membrane. Disordered regions lie at residues 115–190 (ASSS…SSYR) and 243–322 (TNGT…SSSS). 3 stretches are compositionally biased toward low complexity: residues 116-176 (SSSS…SSRT), 243-278 (TNGTNSTNSTSTTSHSLTKLPTSSKSLTTSKTTASG), and 289-322 (STNDTTNTTDDATNTTSDSSSSSSASASSSSSSS). A helical membrane pass occupies residues 327–347 (LVSQPVGISAVIAFFAVALSL). Over 348–349 (TL) the chain is Cytoplasmic.

It localises to the endoplasmic reticulum membrane. This is an uncharacterized protein from Schizosaccharomyces pombe (strain 972 / ATCC 24843) (Fission yeast).